The following is a 253-amino-acid chain: MTEFVVLIPARLDSSRLPGKALADIHGKPMVVRVAEQAAKSKAARVVVATDHPDIQTACQAHGIEVVMTSNRHESGTTRLAEASVALKLPPHLIVVNVQGDEPLIAPELIDRTAEVLVENNVQMATAAHELHDFDELMNPNAVKVVLDKNRNAIYFSRAPIPYPRDAIRAGKREMPSETAVLRHIGIYAYRAGFLQRYAEMSVSPLETIESLEQLRVLWHGYPIAVETAKEAPAAGVDTQEDLDRVRAVFQTV.

This sequence belongs to the KdsB family.

It localises to the cytoplasm. The catalysed reaction is 3-deoxy-alpha-D-manno-oct-2-ulosonate + CTP = CMP-3-deoxy-beta-D-manno-octulosonate + diphosphate. It participates in nucleotide-sugar biosynthesis; CMP-3-deoxy-D-manno-octulosonate biosynthesis; CMP-3-deoxy-D-manno-octulosonate from 3-deoxy-D-manno-octulosonate and CTP: step 1/1. The protein operates within bacterial outer membrane biogenesis; lipopolysaccharide biosynthesis. Activates KDO (a required 8-carbon sugar) for incorporation into bacterial lipopolysaccharide in Gram-negative bacteria. The protein is 3-deoxy-manno-octulosonate cytidylyltransferase of Neisseria meningitidis serogroup B (strain ATCC BAA-335 / MC58).